Consider the following 417-residue polypeptide: MALLPFFDLTNFESDASEELGWLKYVGRVQTRVFPQHFKDNLEKVRKISETIDVIVDTTAELGPEACVNLLNAGALAILVNEEMLNELADISPNRLVLKTDTTDIGKIEKLSQVAGSIQWIGSAENYPPDFFERASKIIHKAVMPEGGGRTLYLEFPEQPSMEVLKSFSVHSVVPVLSSSFLTVKPAEEPKKLSLADLILISANTDREDGLFSTLVVNELGIALGLVYSSKESVAESLKTGTGVYQSRKRGLWYKGASSGAVQHLIHIDVDCDEDCLRFVVYQTGKGFCHLDTLHCFGQASGLCQLEKTLIDRKNNAPEGSYTARLFSDPKLLRAKIMEEAEELCDATTKENVIWEMADLMYFAITRCVGSGVSLNDISRHLDLKHRKVTRRKGDAKVAWQEKLKDKGGVANTSYTA.

The tract at residues 225-299 (GLVYSSKESV…HLDTLHCFGQ (75 aa)) is phosphoribosyl-AMP cyclohydrolase. Positions 303–387 (LCQLEKTLID…ISRHLDLKHR (85 aa)) are phosphoribosyl-ATP pyrophosphohydrolase.

Its subcellular location is the cytoplasm. The catalysed reaction is 1-(5-phospho-beta-D-ribosyl)-5'-AMP + H2O = 1-(5-phospho-beta-D-ribosyl)-5-[(5-phospho-beta-D-ribosylamino)methylideneamino]imidazole-4-carboxamide. The enzyme catalyses 1-(5-phospho-beta-D-ribosyl)-ATP + H2O = 1-(5-phospho-beta-D-ribosyl)-5'-AMP + diphosphate + H(+). It functions in the pathway amino-acid biosynthesis; L-histidine biosynthesis; L-histidine from 5-phospho-alpha-D-ribose 1-diphosphate: step 2/9. It participates in amino-acid biosynthesis; L-histidine biosynthesis; L-histidine from 5-phospho-alpha-D-ribose 1-diphosphate: step 3/9. In Schizosaccharomyces pombe (strain 972 / ATCC 24843) (Fission yeast), this protein is Histidine biosynthesis bifunctional protein his7.